A 93-amino-acid polypeptide reads, in one-letter code: UPF0358 protein OB1428 (93 aa).

This sequence belongs to the UPF0358 family.

The sequence is that of UPF0358 protein OB1428 from Oceanobacillus iheyensis (strain DSM 14371 / CIP 107618 / JCM 11309 / KCTC 3954 / HTE831).